A 247-amino-acid chain; its full sequence is 5'-nucleotidase SurE (247 aa).

The a divalent metal cation site is built by aspartate 8, aspartate 9, serine 39, and asparagine 91.

It belongs to the SurE nucleotidase family. It depends on a divalent metal cation as a cofactor.

It is found in the cytoplasm. The catalysed reaction is a ribonucleoside 5'-phosphate + H2O = a ribonucleoside + phosphate. Nucleotidase that shows phosphatase activity on nucleoside 5'-monophosphates. The polypeptide is 5'-nucleotidase SurE (Aromatoleum aromaticum (strain DSM 19018 / LMG 30748 / EbN1) (Azoarcus sp. (strain EbN1))).